Consider the following 778-residue polypeptide: Kin of IRRE-like protein 3 (778 aa).

Residues 1–21 (MRPFQLDLLFLCFFLFSQELG) form the signal peptide. Over 22–535 (LQKRGCCLVL…GLEAESVPMA (514 aa)) the chain is Extracellular. 5 consecutive Ig-like C2-type domains span residues 48 to 142 (YSFS…ARLT), 147 to 243 (PDDP…TSVT), 249 to 330 (PPLV…RTVD), 335 to 415 (PRMT…VTLT), and 419 to 515 (PPII…IRLK). Residues Cys-69 and Cys-127 are joined by a disulfide bond. Asn-167 carries an N-linked (GlcNAc...) asparagine glycan. A disulfide bridge links Cys-170 with Cys-227. N-linked (GlcNAc...) asparagine glycosylation is present at Asn-253. Cys-271 and Cys-314 are joined by a disulfide. A glycan (N-linked (GlcNAc...) asparagine) is linked at Asn-324. 2 cysteine pairs are disulfide-bonded: Cys-356–Cys-398 and Cys-440–Cys-499. Asn-498 carries N-linked (GlcNAc...) asparagine glycosylation. Residues 536–556 (VIIGVAVGAGVAFLVLMATIV) traverse the membrane as a helical segment. The Cytoplasmic segment spans residues 557 to 778 (AFCCARSQRN…PLQRRMQTHV (222 aa)). Residues 727–736 (CDSSVSSSGK) are compositionally biased toward polar residues. Positions 727–778 (CDSSVSSSGKQDGYVQFDKASKASASSSHHSQSSSQNSDPSRPLQRRMQTHV) are disordered. Over residues 748–762 (KASASSSHHSQSSSQ) the composition is skewed to low complexity.

This sequence belongs to the immunoglobulin superfamily. Homodimer; mediates homophilic interactions to promote cell adhesion. Interacts with NPHS1; forms heterodimers with NPHS1. Interacts with NPHS2/podocin (via the C-terminus). Interacts with CASK. Interacts (via extracellular region) with MAP1B. Interacts (via extracellular region) with MYO16. Interacts (via intracellular region) with ATP1B1. Interacts (via intracellular region) with SHMT2. Interacts (via intracellular region) with UFC1. Post-translationally, undergoes proteolysis by a metalloprotease and gives rise to a soluble form. Expressed mainly in adult brain, bone marrow and stromal cells. Expressed in diverse regions of the brain, including the cortex, hippocampus, striatum, olfactory bulb and cerebellum. In brain, expressed in pontine nucleus neurons (at protein level). In hippocampus, produced in both the dentate granule neurons and the GABAergic neurons, but not the CA3 neurons. Expressed in subpopulations of vomeronasal sensory neurons. Expressed in a subset of neurons in dorsal root ganglia.

The protein localises to the cell membrane. Its subcellular location is the cell projection. The protein resides in the axon. It localises to the dendrite. It is found in the secreted. Its function is as follows. Synaptic adhesion molecule required for the formation of target-specific synapses. Required for formation of target-specific synapses at hippocampal mossy fiber synapses. Required for formation of mossy fiber filopodia, the synaptic structures connecting dentate granule and GABA neurons. Probably acts as a homophilic adhesion molecule that promotes trans-cellular interactions and stabilize mossy fiber filipodia contact and subsequent synapse formation. Required for the coalescence of vomeronasal sensory neuron axons. May be involved in the hematopoietic supportive capacity of stroma cells; the secreted extracellular domain is directly responsible for supporting hematopoietic stem cells. The sequence is that of Kin of IRRE-like protein 3 (Kirrel3) from Mus musculus (Mouse).